Consider the following 609-residue polypeptide: UvrABC system protein C (609 aa).

In terms of domain architecture, GIY-YIG spans 16 to 94 (SSAGVYRMYD…IKQYMPRYNV (79 aa)). A UVR domain is found at 203–238 (QQVIATLVGKMEQAAMDLNYEDAARYRDQISALRRV).

This sequence belongs to the UvrC family. As to quaternary structure, interacts with UvrB in an incision complex.

The protein localises to the cytoplasm. Functionally, the UvrABC repair system catalyzes the recognition and processing of DNA lesions. UvrC both incises the 5' and 3' sides of the lesion. The N-terminal half is responsible for the 3' incision and the C-terminal half is responsible for the 5' incision. This chain is UvrABC system protein C, found in Shewanella loihica (strain ATCC BAA-1088 / PV-4).